Consider the following 607-residue polypeptide: UPF0329 protein ECU06_1610 (607 aa).

Disordered regions lie at residues 312 to 410 (VHEV…RSKG) and 531 to 570 (TSSEKTGKGSSPSFGKGDDVDEIEEDGSSDMSGFQYPPGV). The span at 313-347 (HEVKERESEEKRREEESLRNAEELLRMEEREKGEG) shows a compositional bias: basic and acidic residues. Over residues 353–364 (KGKKKRGKKGAG) the composition is skewed to basic residues. The segment covering 365 to 374 (KAKEESKEED) has biased composition (basic and acidic residues). Over residues 375-393 (RGEEEEESVEAEVPVEEMA) the composition is skewed to acidic residues. The segment covering 531-543 (TSSEKTGKGSSPS) has biased composition (polar residues). Over residues 549-558 (DVDEIEEDGS) the composition is skewed to acidic residues.

Belongs to the UPF0329 family.

The sequence is that of UPF0329 protein ECU06_1610 from Encephalitozoon cuniculi (strain GB-M1) (Microsporidian parasite).